The chain runs to 337 residues: MIIIKNLEITYPGKRKVKAVDNVSLEIKKGEIFGIIGLSGAGKSSLLRAINGLVRPTSGEVWVDGVEITRLSSKELLNLRQKIGMIFQHFNLLDSRTVFGNVAFPLEIGGYPREQIKKRVMEVLELVGLLDKAESYPRELSGGQKQRVGIARAIAANPKILLCDEPTSALDPQTTGQILKLLAEINQKLGITIVIITHEMRVITEICDRVAVMDNGRVVEEGVVTDVFLNPWHPITKEFVNTVISKELPEEVLAHARTRRPDREVLLLRFAGNTANEPVVSRIIKETGVELSILYGNIGHLKDVPYGILAVEIFGDENRRDKVRQILHELSVKLEVV.

The ABC transporter domain occupies 4 to 240; that stretch reads IKNLEITYPG…PWHPITKEFV (237 aa). ATP is bound at residue 37–44; that stretch reads GLSGAGKS.

Belongs to the ABC transporter superfamily. Methionine importer (TC 3.A.1.24) family. As to quaternary structure, the complex is composed of two ATP-binding proteins (MetN), two transmembrane proteins (MetI) and a solute-binding protein (MetQ).

The protein localises to the cell membrane. The enzyme catalyses L-methionine(out) + ATP + H2O = L-methionine(in) + ADP + phosphate + H(+). It catalyses the reaction D-methionine(out) + ATP + H2O = D-methionine(in) + ADP + phosphate + H(+). Part of the ABC transporter complex MetNIQ involved in methionine import. Responsible for energy coupling to the transport system. The polypeptide is Methionine import ATP-binding protein MetN (Carboxydothermus hydrogenoformans (strain ATCC BAA-161 / DSM 6008 / Z-2901)).